The primary structure comprises 2014 residues: Leucine-rich repeat serine/threonine-protein kinase 1 (2014 aa).

5 ANK repeats span residues 51 to 81, 86 to 116, 119 to 148, 152 to 182, and 193 to 222; these read QCPS…CEES, EKGQ…ELPT, TDDN…GPCT, LLNW…DPEN, and IVRL…YFCS. LRR repeat units lie at residues 279–300, 303–324, 330–351, 353–374, 381–402, 405–426, 427–447, 451–472, 474–495, 498–519, 549–570, 572–594, and 596–617; these read QITE…IPWG, NLKK…QSSD, RLLE…FLHL, KLQK…ENAT, KLQE…FMHS, SLTS…WSCP, LKCC…MAVF, HLRD…LFQL, ALMF…EKWT, QLKT…LKTK, SLEV…VCLL, NLSE…LGQL, and NLWQ…VRKE. The Roc domain occupies 632 to 826; that stretch reads KAEKCKLMKM…QLIFHVTCNM (195 aa). Positions 647, 648, 650, 651, 652, 653, 670, 758, 760, 806, and 807 each coordinate GDP. Residues 840–1237 form the COR domain; it reads GRLIPRSYIS…PARLFLENSK (398 aa). A Phosphothreonine modification is found at threonine 1061. Phosphoserine is present on residues serine 1064 and serine 1074. The residue at position 1075 (threonine 1075) is a Phosphothreonine. Positions 1242 to 1525 constitute a Protein kinase domain; that stretch reads EGENSILGQG…VVSQMKDPTF (284 aa). ATP contacts are provided by residues 1248-1256 and lysine 1270; that span reads LGQGGSGTV. The Proton acceptor role is filled by aspartate 1386. 7 WD repeats span residues 1539–1579, 1582–1622, 1623–1668, 1693–1729, 1730–1778, 1779–1948, and 1950–1986; these read AFFS…RMTC, MKLS…QALD, TPAV…SCSY, VKAM…RLEP, YAAP…YFCG, DPNP…AVLK, and RELN…AVWR. The tract at residues 1791 to 1906 is WD40 loop; involved in dimer stabilization; it reads PSVLETPGSH…MDGETFSQHL (116 aa). Residues 1839–1895 form a disordered region; it reads SMSSYSSSPPHQDPRSPSSLPSSLTSYSSVPFSANYEDSDRLQEPSVTSDRTEHDLS. Low complexity predominate over residues 1853–1871; that stretch reads RSPSSLPSSLTSYSSVPFS.

Belongs to the protein kinase superfamily. TKL Ser/Thr protein kinase family. ROCO subfamily. Homodimer. The homodimer is autoinhibited and stabilized by its N-terminal residues and ANK repeats. Interacts with CSK. It depends on Mg(2+) as a cofactor. Mn(2+) serves as cofactor. In terms of processing, autophosphorylated. Autophosphorylation in inhibited in its dimeric state. Phosphorylated by protein kinase C isozymes PRKCA, PRKCB, PRKCG, PRKCE, PRKCZ and PRKCT at Ser-1064, Ser-1074 and Thr-1075. Phosphorylation at these residues activates the kinase activity of LRRK1 to phosphorylate RAB7A. As to expression, expressed in osteoclasts and bone marrow stromal cells.

It localises to the cytoplasm. The protein localises to the cell membrane. It carries out the reaction L-seryl-[protein] + ATP = O-phospho-L-seryl-[protein] + ADP + H(+). The enzyme catalyses L-threonyl-[protein] + ATP = O-phospho-L-threonyl-[protein] + ADP + H(+). Its activity is regulated as follows. Activated by phosphorylation by PKC. Binds both GTP and GDP; binding of GTP stimulates kinase activity. Sterically autoinhibited in its dimeric state. Functionally, serine/threonine-protein kinase which phosphorylates RAB proteins involved in intracellular trafficking. Phosphorylates RAB7A; this activity is dependent on protein kinase C (PKC) activation. Plays a role in the negative regulation of bone mass, acting through the maturation of osteoclasts. The protein is Leucine-rich repeat serine/threonine-protein kinase 1 of Mus musculus (Mouse).